A 290-amino-acid polypeptide reads, in one-letter code: Acetylglutamate kinase (290 aa).

Substrate contacts are provided by residues 65–66 (GG), arginine 87, and asparagine 186.

The protein belongs to the acetylglutamate kinase family. ArgB subfamily.

The protein localises to the cytoplasm. The catalysed reaction is N-acetyl-L-glutamate + ATP = N-acetyl-L-glutamyl 5-phosphate + ADP. Its pathway is amino-acid biosynthesis; L-arginine biosynthesis; N(2)-acetyl-L-ornithine from L-glutamate: step 2/4. Catalyzes the ATP-dependent phosphorylation of N-acetyl-L-glutamate. In Mycobacterium sp. (strain KMS), this protein is Acetylglutamate kinase.